The chain runs to 467 residues: Serine/threonine-protein phosphatase 2A 56 kDa regulatory subunit epsilon isoform (467 aa).

A disordered region spans residues 1 to 40 (MSSAPTTPPSVDKVDGFSRKSVRKARQKRSQSSSQFRSQG). Serine 2 carries the post-translational modification N-acetylserine. Threonine 7 carries the post-translational modification Phosphothreonine. Residues 20-29 (KSVRKARQKR) show a composition bias toward basic residues. Phosphoserine is present on residues serine 30, serine 32, and serine 34. The span at 30–40 (SQSSSQFRSQG) shows a compositional bias: low complexity.

This sequence belongs to the phosphatase 2A regulatory subunit B56 family. In terms of assembly, found in a complex with at least ARL2, PPP2CB; PPP2R1A, PPP2R2A, PPP2R5E and TBCD. PP2A consists of a common heterodimeric core enzyme, composed of a 36 kDa catalytic subunit (subunit C) and a 65 kDa constant regulatory subunit (PR65 or subunit A), that associates with a variety of regulatory subunits. Proteins that associate with the core dimer include three families of regulatory subunits B (the R2/B/PR55/B55, R3/B''/PR72/PR130/PR59 and R5/B'/B56 families), the 48 kDa variable regulatory subunit, viral proteins, and cell signaling molecules. Interacts with SGO1. Phosphorylated on serine residues.

It is found in the cytoplasm. The B regulatory subunit might modulate substrate selectivity and catalytic activity, and might also direct the localization of the catalytic enzyme to a particular subcellular compartment. This Homo sapiens (Human) protein is Serine/threonine-protein phosphatase 2A 56 kDa regulatory subunit epsilon isoform (PPP2R5E).